Reading from the N-terminus, the 204-residue chain is Octanoyltransferase (204 aa).

One can recognise a BPL/LPL catalytic domain in the interval 27–202 (QGGEEALLLL…RFQPFLHLHL (176 aa)). Substrate contacts are provided by residues 65–72 (RGGDVTYH), 132–134 (SIG), and 145–147 (GFA). Residue C163 is the Acyl-thioester intermediate of the active site.

Belongs to the LipB family.

It localises to the cytoplasm. The enzyme catalyses octanoyl-[ACP] + L-lysyl-[protein] = N(6)-octanoyl-L-lysyl-[protein] + holo-[ACP] + H(+). It functions in the pathway protein modification; protein lipoylation via endogenous pathway; protein N(6)-(lipoyl)lysine from octanoyl-[acyl-carrier-protein]: step 1/2. Its function is as follows. Catalyzes the transfer of endogenously produced octanoic acid from octanoyl-acyl-carrier-protein onto the lipoyl domains of lipoate-dependent enzymes. Lipoyl-ACP can also act as a substrate although octanoyl-ACP is likely to be the physiological substrate. This is Octanoyltransferase from Geobacter sp. (strain M21).